The chain runs to 81 residues: Small ribosomal subunit protein eS21 (81 aa).

The protein belongs to the eukaryotic ribosomal protein eS21 family. Component of the 40S small ribosomal subunit.

Its subcellular location is the cytoplasm. The protein localises to the cytosol. It is found in the rough endoplasmic reticulum. Component of the small ribosomal subunit. The ribosome is a large ribonucleoprotein complex responsible for the synthesis of proteins in the cell. The sequence is that of Small ribosomal subunit protein eS21 (rps21) from Danio rerio (Zebrafish).